Consider the following 545-residue polypeptide: Sulfite oxidase, mitochondrial (545 aa).

The N-terminal 79 residues, 1 to 79, are a transit peptide targeting the mitochondrion; the sequence is MLLLHRAVVL…YQDHRCRAAQ (79 aa). Positions 82–161 constitute a Cytochrome b5 heme-binding domain; sequence TRIYTKEEVS…LAQYKVGELN (80 aa). Histidine 118 contributes to the heme b binding site. Serine 123 is modified (phosphoserine). 3 residues coordinate heme b: histidine 143, glutamine 145, and histidine 147. The tract at residues 165-174 is hinge; sequence KVAPTVETSD. The moco domain stretch occupies residues 175 to 401; sequence PYADDPVRHP…YSHWQRRDYK (227 aa). Residues 215 to 219, cysteine 264, aspartate 322, histidine 361, arginine 366, and 377 to 379 each bind Mo-molybdopterin; these read FTRNH and HVK. A homodimerization region spans residues 402–538; sequence GFSPSVDWDT…RGVLSNAWHR (137 aa).

As to quaternary structure, homodimer. Heme b serves as cofactor. Requires Mo-molybdopterin as cofactor.

The protein localises to the mitochondrion intermembrane space. It catalyses the reaction sulfite + O2 + H2O = sulfate + H2O2. It functions in the pathway energy metabolism; sulfur metabolism. In terms of biological role, catalyzes the oxidation of sulfite to sulfate, the terminal reaction in the oxidative degradation of sulfur-containing amino acids. The sequence is that of Sulfite oxidase, mitochondrial (SUOX) from Macaca fascicularis (Crab-eating macaque).